The following is a 530-amino-acid chain: MSYLLALDAGTGSVRAVIFDLHGNQISVGQAEWKHLSVENVPGSMEFDLDTNWRLACQCIHQALERAHLNAADIQSVACCSMREGIVLYDRNGDAIWACANVDARASREVAELKEIHDYRFESEVYDVSGQTLALSAMPRLLWLAHHRPDIYRNAATITMISDWLAAKLSGELAVDPSNAGTTGMLDLFSRDWRPALLDMAGLRADILSPVKETGTVLGAVTKAAASQSGLREGTPVVMGGGDVQLGCLGLGVVRAGQTAVLGGTFWQQVVNLPQVRTDPDMNIRVNPHVIPGMAQAESISFFTGLTMRWFRDAFCAEEKLIAERMGMDAYALLEEMANRVPAGSHGVMPIFSDAMHFKQWYHAAPSFINLSIDPEKCNKATLFRALEENAAIVSACNLAQISRFSGVTFESLVFAGGGAKGALWSQILSDVTGLPVRVPEVKEATALGCAIAAGTGAGLYNDMAATGEKLVKWSREFTPNPEHRELYDGMMQKWQAVYADQLGLVDSGLTTSMWQAPGLVRVPSPRPSP.

This sequence belongs to the FGGY kinase family.

It is found in the cytoplasm. It carries out the reaction (S)-4,5-dihydroxypentane-2,3-dione + ATP = (2S)-2-hydroxy-3,4-dioxopentyl phosphate + ADP + H(+). Its function is as follows. Catalyzes the phosphorylation of autoinducer-2 (AI-2) to phospho-AI-2, which subsequently inactivates the transcriptional regulator LsrR and leads to the transcription of the lsr operon. Phosphorylates the ring-open form of (S)-4,5-dihydroxypentane-2,3-dione (DPD), which is the precursor to all AI-2 signaling molecules, at the C5 position. The chain is Autoinducer-2 kinase from Enterobacter sp. (strain 638).